The primary structure comprises 1799 residues: Putative neural-cadherin 2 (1799 aa).

Residues Asn-13, Asn-64, Asn-86, Asn-118, Asn-195, Asn-260, Asn-264, Asn-283, and Asn-377 are each glycosylated (N-linked (GlcNAc...) asparagine). 7 Cadherin domains span residues 37–136 (DRFL…PPVF), 137–252 (DRQT…APQF), 253–364 (PQGI…PPQF), 368–485 (EWVT…VPKF), 486–590 (DREH…APTF), 590–709 (FAQD…QPGS), and 708–812 (GSKS…AGSM). N-linked (GlcNAc...) asparagine glycans are attached at residues Asn-601, Asn-793, Asn-910, Asn-948, and Asn-969. The EGF-like 1 domain maps to 973–1010 (QDHNCRTHLCYNGGRCVETRNGPKCVACPVGYNGPRCQ). 7 disulfide bridges follow: Cys-977–Cys-988, Cys-982–Cys-997, Cys-1000–Cys-1009, Cys-1191–Cys-1217, Cys-1224–Cys-1239, Cys-1233–Cys-1248, and Cys-1250–Cys-1259. The 207-residue stretch at 1011–1217 (QSTRSFRGNG…ALARNSFPAC (207 aa)) folds into the Laminin G-like 1 domain. In terms of domain architecture, EGF-like 2 spans 1220–1260 (TDEVCLKTEHTARCWEHGNCVASLVQAKCHCQPGWMGPGCN). A Laminin G-like 2 domain is found at 1263-1454 (TIPTTFKAQS…TMARNLERNC (192 aa)). Residues Asn-1376 and Asn-1437 are each glycosylated (N-linked (GlcNAc...) asparagine). 4 disulfides stabilise this stretch: Cys-1419/Cys-1454, Cys-1501/Cys-1512, Cys-1506/Cys-1523, and Cys-1525/Cys-1534. Residues 1497–1535 (DRNECLDLPCLNGATCINLEPRLRYRCICPEGYWGENCE) form the EGF-like 3; calcium-binding domain. The helical transmembrane segment at 1549-1569 (ALGAIFVCLIIILILALIFVL) threads the bilayer. The tract at residues 1726 to 1799 (ASSQLPSDGG…PLPEVDKVVL (74 aa)) is disordered. 3 stretches are compositionally biased toward gly residues: residues 1733 to 1744 (DGGGGSGDGPGP), 1752 to 1763 (LGGGGTGGGSGI), and 1775 to 1786 (SGAGPGGGGGSS).

Its subcellular location is the cell membrane. Its function is as follows. Cadherins are calcium-dependent cell adhesion proteins. They preferentially interact with themselves in a homophilic manner in connecting cells. This chain is Putative neural-cadherin 2 (CadN2), found in Drosophila melanogaster (Fruit fly).